We begin with the raw amino-acid sequence, 635 residues long: Biosynthetic arginine decarboxylase (635 aa).

N6-(pyridoxal phosphate)lysine is present on lysine 100. 282–292 (LDIGGGLGVDY) provides a ligand contact to substrate.

This sequence belongs to the Orn/Lys/Arg decarboxylase class-II family. SpeA subfamily. Requires Mg(2+) as cofactor. The cofactor is pyridoxal 5'-phosphate.

The catalysed reaction is L-arginine + H(+) = agmatine + CO2. The protein operates within amine and polyamine biosynthesis; agmatine biosynthesis; agmatine from L-arginine: step 1/1. Its function is as follows. Catalyzes the biosynthesis of agmatine from arginine. The polypeptide is Biosynthetic arginine decarboxylase (Geobacter sp. (strain M21)).